The following is a 213-amino-acid chain: MKPYQRQFIEFALNKQVLKFGEFTLKSGRKSPYFFNAGLFNTGRDLALLGRFYAEALVDSGIEFDLLFGPAYKGIPIATTTAVALAEHHDKDLPYCFNRKEAKDHGEGGSLVGSALQGRVMLVDDVITAGTAIRESMEIIQAHRATLAGVLISLDRQERGRGEISAIQEVERDYGCKVISIITLKDLIAYLEEKPDMAEHLAAVRAYREEFGV.

Lys-26 is a binding site for 5-phospho-alpha-D-ribose 1-diphosphate. 34–35 (FF) lines the orotate pocket. 5-phospho-alpha-D-ribose 1-diphosphate contacts are provided by residues 72-73 (YK), Arg-99, Lys-100, Lys-103, His-105, and 124-132 (DDVITAGTA). Orotate contacts are provided by Thr-128 and Arg-156.

The protein belongs to the purine/pyrimidine phosphoribosyltransferase family. PyrE subfamily. Homodimer. Mg(2+) serves as cofactor.

It carries out the reaction orotidine 5'-phosphate + diphosphate = orotate + 5-phospho-alpha-D-ribose 1-diphosphate. It participates in pyrimidine metabolism; UMP biosynthesis via de novo pathway; UMP from orotate: step 1/2. Functionally, catalyzes the transfer of a ribosyl phosphate group from 5-phosphoribose 1-diphosphate to orotate, leading to the formation of orotidine monophosphate (OMP). The sequence is that of Orotate phosphoribosyltransferase from Salmonella typhi.